The following is a 499-amino-acid chain: MARKIKIFDTTLRDGEQTPGVSLTVEEKIEIAKQLARLNVDVIEAGFPISSPGEFEAVKRIAREVRGPTIAALARAVKKDIDAAGEALKDAESKRIHTFIATSLIHMKYKLRKTPEEVKKMAVEAVEYATKYTDDIEFSAEDATRSDWNFLVEVYEAVIDAGATTINVPDTVGYTTPEEFYELIRYLKRNITNLNGVTISVHCHNDLGLAVANSLSAVRAGADQVEVTVNGIGERAGNAALEEVVVALDVRKDFYNVETGINLGEIARTSKLVARLTGIEVPPNKAVVGANAFAHESGIHQDGVLKERTTYEIIDPRKLGFSGSKIVLGKHSGRHAFRKKLEEMGYRLSEEEINRLFAKFKEIADRKKGLTELDIEAIVQEELGKGKGKYSVEVLHVISGKISTATVRVQGDGIDKIESAWSSNGPIDALFAAINRALGIDCKLKEYRVSSVTSGRDALGEVLVRVEYNGEIYVGRGLSTDIIEASAQAYLSALNRIRR.

The Pyruvate carboxyltransferase domain maps to 5–267 (IKIFDTTLRD…ETGINLGEIA (263 aa)). Mn(2+)-binding residues include Asp-14, His-202, His-204, and Asn-238. A regulatory domain region spans residues 391–499 (SVEVLHVISG…YLSALNRIRR (109 aa)).

It belongs to the alpha-IPM synthase/homocitrate synthase family. LeuA type 1 subfamily. Mn(2+) serves as cofactor.

The protein resides in the cytoplasm. It catalyses the reaction 3-methyl-2-oxobutanoate + acetyl-CoA + H2O = (2S)-2-isopropylmalate + CoA + H(+). Its pathway is amino-acid biosynthesis; L-leucine biosynthesis; L-leucine from 3-methyl-2-oxobutanoate: step 1/4. Its function is as follows. Catalyzes the condensation of the acetyl group of acetyl-CoA with 3-methyl-2-oxobutanoate (2-ketoisovalerate) to form 3-carboxy-3-hydroxy-4-methylpentanoate (2-isopropylmalate). This Pyrococcus furiosus (strain ATCC 43587 / DSM 3638 / JCM 8422 / Vc1) protein is 2-isopropylmalate synthase.